We begin with the raw amino-acid sequence, 481 residues long: MVLKVFKDHFGRGYEVYEKSYREKDSLSFFLTKEEEGKILVVAGEKAPEGLSFFKKQRAEGVSFFFCERNHENLEVLRKYFPDLKPVRAGLRASFGTGDRLGITTPAHVRALKDSGLFPIFAQQSVRENERTGRTWRDVLDDATWGVFQEGYSEGFGADADHVKRPEDLVSAAREGFTMFTIDPSDHVRNLSKLTEKERNEKFEEILRKERIDRIYLGKKYSVLGEKIEFDEKNLRDAALVYYDAIAHVDMMYQILKDETPDFDFEVSVDETETPTSPLFHIFVVEELRRRGVEFTNLALRFIGEWEKGIDYKGDLAQFEREIKMHAEIARMFEGYKISLHSGSDKFSVYPAFASATGGLFHVKTAGTSYLEAVKVISMVNPELFREIYRCTLDHFEEDRKSYHISADLSKVPEVEKVKDEDLPGLFEDINVRQLIHVTYGSVLKDASLKERLFKTLEQNEELFYETVAKHIKRHVDLLEG.

Asp-161 serves as the catalytic Proton acceptor. His-162 serves as a coordination point for a divalent metal cation. The active-site Proton donor is Glu-266. A divalent metal cation is bound by residues Lys-308 and His-341.

This sequence belongs to the UxaE family. A divalent metal cation is required as a cofactor.

It catalyses the reaction keto-D-tagaturonate = keto-D-fructuronate. Functionally, catalyzes the epimerization of D-tagaturonate (D-TagA) to D-fructuronate (D-FruA). In Thermotoga maritima (strain ATCC 43589 / DSM 3109 / JCM 10099 / NBRC 100826 / MSB8), this protein is Tagaturonate/fructuronate epimerase.